Here is a 238-residue protein sequence, read N- to C-terminus: Ubiquinone biosynthesis O-methyltransferase (238 aa).

Residues R38, G58, D79, and M124 each contribute to the S-adenosyl-L-methionine site.

It belongs to the methyltransferase superfamily. UbiG/COQ3 family.

The catalysed reaction is a 3-demethylubiquinol + S-adenosyl-L-methionine = a ubiquinol + S-adenosyl-L-homocysteine + H(+). The enzyme catalyses a 3-(all-trans-polyprenyl)benzene-1,2-diol + S-adenosyl-L-methionine = a 2-methoxy-6-(all-trans-polyprenyl)phenol + S-adenosyl-L-homocysteine + H(+). Its pathway is cofactor biosynthesis; ubiquinone biosynthesis. Its function is as follows. O-methyltransferase that catalyzes the 2 O-methylation steps in the ubiquinone biosynthetic pathway. In Acinetobacter baylyi (strain ATCC 33305 / BD413 / ADP1), this protein is Ubiquinone biosynthesis O-methyltransferase.